A 508-amino-acid polypeptide reads, in one-letter code: 3-octaprenyl-4-hydroxybenzoate carboxy-lyase (508 aa).

A Mn(2+)-binding site is contributed by N178. Prenylated FMN is bound by residues 181–183 (IYR), 195–197 (RWL), and 200–201 (RG). E244 serves as a coordination point for Mn(2+). The Proton donor role is filled by D303.

Belongs to the UbiD family. In terms of assembly, homohexamer. The cofactor is prenylated FMN. It depends on Mn(2+) as a cofactor.

The protein resides in the cell membrane. The enzyme catalyses a 4-hydroxy-3-(all-trans-polyprenyl)benzoate + H(+) = a 2-(all-trans-polyprenyl)phenol + CO2. The protein operates within cofactor biosynthesis; ubiquinone biosynthesis. Its function is as follows. Catalyzes the decarboxylation of 3-octaprenyl-4-hydroxy benzoate to 2-octaprenylphenol, an intermediate step in ubiquinone biosynthesis. In Cupriavidus taiwanensis (strain DSM 17343 / BCRC 17206 / CCUG 44338 / CIP 107171 / LMG 19424 / R1) (Ralstonia taiwanensis (strain LMG 19424)), this protein is 3-octaprenyl-4-hydroxybenzoate carboxy-lyase.